We begin with the raw amino-acid sequence, 335 residues long: HTH-type transcriptional regulator LacR (335 aa).

The HTH lacI-type domain maps to 1-58 (MRTIKEIALESGYSPATVSRLLNNDPNLSITADTKNKILEIANKLGYWEDHQEKKIKP). A DNA-binding region (H-T-H motif) is located at residues 4-23 (IKEIALESGYSPATVSRLLN).

It functions in the pathway carbohydrate metabolism; lactose degradation [regulation]. In terms of biological role, negatively regulates the transcription of the lactose utilization genes lacL and lacM. The protein is HTH-type transcriptional regulator LacR (lacR) of Lactobacillus helveticus (Lactobacillus suntoryeus).